Here is a 459-residue protein sequence, read N- to C-terminus: Putrescine aminotransferase (459 aa).

Residues 150–151 (GT) and glutamine 274 contribute to the pyridoxal 5'-phosphate site. Residue lysine 300 is modified to N6-(pyridoxal phosphate)lysine. Pyridoxal 5'-phosphate is bound at residue threonine 332.

Belongs to the class-III pyridoxal-phosphate-dependent aminotransferase family. Putrescine aminotransferase subfamily. Pyridoxal 5'-phosphate is required as a cofactor.

The catalysed reaction is an alkane-alpha,omega-diamine + 2-oxoglutarate = an omega-aminoaldehyde + L-glutamate. It carries out the reaction putrescine + 2-oxoglutarate = 1-pyrroline + L-glutamate + H2O. The enzyme catalyses cadaverine + 2-oxoglutarate = 5-aminopentanal + L-glutamate. Its pathway is amine and polyamine degradation; putrescine degradation; 4-aminobutanal from putrescine (transaminase route): step 1/1. In terms of biological role, catalyzes the aminotransferase reaction from putrescine to 2-oxoglutarate, leading to glutamate and 4-aminobutanal, which spontaneously cyclizes to form 1-pyrroline. This is the first step in one of two pathways for putrescine degradation, where putrescine is converted into 4-aminobutanoate (gamma-aminobutyrate or GABA) via 4-aminobutanal. Also functions as a cadaverine transaminase in a a L-lysine degradation pathway to succinate that proceeds via cadaverine, glutarate and L-2-hydroxyglutarate. The polypeptide is Putrescine aminotransferase (Escherichia coli (strain ATCC 8739 / DSM 1576 / NBRC 3972 / NCIMB 8545 / WDCM 00012 / Crooks)).